The primary structure comprises 374 residues: UPF0496 protein At4g34320 (374 aa).

Transmembrane regions (helical) follow at residues 215–235 (IIFV…AAMA) and 238–258 (PVAA…GKWI).

Belongs to the UPF0496 family.

It is found in the membrane. The chain is UPF0496 protein At4g34320 from Arabidopsis thaliana (Mouse-ear cress).